We begin with the raw amino-acid sequence, 82 residues long: Small ribosomal subunit protein uS17 (82 aa).

The protein belongs to the universal ribosomal protein uS17 family. In terms of assembly, part of the 30S ribosomal subunit.

Functionally, one of the primary rRNA binding proteins, it binds specifically to the 5'-end of 16S ribosomal RNA. The polypeptide is Small ribosomal subunit protein uS17 (Tolumonas auensis (strain DSM 9187 / NBRC 110442 / TA 4)).